Here is a 479-residue protein sequence, read N- to C-terminus: Replication factor C large subunit (479 aa).

56 to 63 (GPPGVGKT) is a binding site for ATP. Residues 435–461 (LGEKPLEPQEAKARRRGEKASRDEGRK) are compositionally biased toward basic and acidic residues. Positions 435 to 479 (LGEKPLEPQEAKARRRGEKASRDEGRKAGKRERKGVGLDFFLGEQ) are disordered.

The protein belongs to the activator 1 small subunits family. RfcL subfamily. Heteromultimer composed of small subunits (RfcS) and large subunits (RfcL).

Functionally, part of the RFC clamp loader complex which loads the PCNA sliding clamp onto DNA. The sequence is that of Replication factor C large subunit from Aeropyrum pernix (strain ATCC 700893 / DSM 11879 / JCM 9820 / NBRC 100138 / K1).